Consider the following 741-residue polypeptide: Transketolase-1, chloroplastic (741 aa).

The transit peptide at 1 to 66 (MASTSSLALS…NRSLRPLVRA (66 aa)) directs the protein to the chloroplast. Residues 22-51 (GSDQRGSLPAFSGLKSTGSRASASSRRRIA) form a disordered region. Ala67 carries the post-translational modification N-acetylalanine. His103 is a binding site for substrate. Residues His143 and 192 to 194 (GPL) contribute to the thiamine diphosphate site. Asp233 contacts Mg(2+). Thiamine diphosphate-binding residues include Gly234 and Asn263. 2 residues coordinate Mg(2+): Asn263 and Ile265. His340 contributes to the substrate binding site. His340 contacts thiamine diphosphate. Position 428 is a phosphoserine (Ser428). Residues Arg434 and Ser461 each coordinate substrate. Thiamine diphosphate-binding residues include Glu488 and Phe515. Glu488 acts as the Proton donor in catalysis. Substrate contacts are provided by His539, Asp547, and Arg598.

The protein belongs to the transketolase family. In terms of assembly, homodimer. It depends on Mg(2+) as a cofactor. Requires Ca(2+) as cofactor. Mn(2+) serves as cofactor. Co(2+) is required as a cofactor. The cofactor is thiamine diphosphate.

It localises to the plastid. The protein localises to the chloroplast stroma. The enzyme catalyses D-sedoheptulose 7-phosphate + D-glyceraldehyde 3-phosphate = aldehydo-D-ribose 5-phosphate + D-xylulose 5-phosphate. It participates in carbohydrate biosynthesis; Calvin cycle. Functionally, catalyzes the reversible transfer of a two-carbon ketol group from fructose-6-phosphate or sedoheptulose-7-phosphate to glyceraldehyde-3-phosphate to yield xylulose-5-phosphate and erythrose-4-phosphate or ribose-5-phosphate, respectively. Could act as a stress sensor involved in adaptation process. This Arabidopsis thaliana (Mouse-ear cress) protein is Transketolase-1, chloroplastic (TKL-1).